The primary structure comprises 370 residues: Peridinin-chlorophyll a-binding protein 1, chloroplastic (370 aa).

The N-terminal 57 residues, 1–57 (MVRSGKKAVVLAAVAFCATSVVQKSHGFVPSPLRQRAAAAGAAAASAATMFAPAAFA), are a transit peptide targeting the chloroplast. 2 consecutive repeat copies span residues 58–220 (DEIG…VPSG) and 221–370 (DKIG…AAQR).

In terms of assembly, homotrimer.

The protein localises to the plastid. Its subcellular location is the chloroplast. Its function is as follows. Water-soluble antenna for capture of solar energy in the blue-green range. Peridinin is an asymmetric carotenoid. The chain is Peridinin-chlorophyll a-binding protein 1, chloroplastic from Amphidinium carterae (Dinoflagellate).